The primary structure comprises 304 residues: Protoheme IX farnesyltransferase 2 (304 aa).

9 helical membrane passes run 28–48 (VVALMLITAVVGMSLAPVVDF), 50–70 (WLQAAFGLVGIGLMAGSAAAF), 98–118 (ISVAIFSTALGVIGFVLLYAL), 122–142 (LTAWMTFLSLLGYAVVYTMYL), 150–170 (IVIAGIAGAMPPLLGWTAVTG), 176–196 (AWLLVMIIFIWTPPHFWAIAI), 223–243 (ILLYTILLTLVCILPVLVGMV), 245–265 (SVYLFSSLLLNAGFMYHAWKL), and 282–302 (IYHLLALFVALLADHYLGLFF).

Belongs to the UbiA prenyltransferase family. Protoheme IX farnesyltransferase subfamily.

The protein localises to the cell inner membrane. The enzyme catalyses heme b + (2E,6E)-farnesyl diphosphate + H2O = Fe(II)-heme o + diphosphate. It functions in the pathway porphyrin-containing compound metabolism; heme O biosynthesis; heme O from protoheme: step 1/1. Its function is as follows. Converts heme B (protoheme IX) to heme O by substitution of the vinyl group on carbon 2 of heme B porphyrin ring with a hydroxyethyl farnesyl side group. In Vibrio campbellii (strain ATCC BAA-1116), this protein is Protoheme IX farnesyltransferase 2.